A 153-amino-acid chain; its full sequence is MAEHLMSDVPFWQSKTLDEMSDAEWESLCDGCGQCCLHKLMDEDTDEIYFTNVACRQLNIKTCQCRNYERRFEFEPDCIKLTRENLPTFEWLPMTCAYRLLAEGKDLPAWHPLLTGSKAAMHGERISVRHIAVKESEVIDWQDHILNKPDWAQ.

It belongs to the UPF0260 family.

This is UPF0260 protein YcgN from Shigella flexneri serotype 5b (strain 8401).